The sequence spans 228 residues: Phosphoribosylformylglycinamidine synthase subunit PurQ (228 aa).

Residues 3-226 (FAVIVFPGSN…IANWRDSYAI (224 aa)) form the Glutamine amidotransferase type-1 domain. The active-site Nucleophile is C87. Residues H195 and E197 contribute to the active site.

In terms of assembly, part of the FGAM synthase complex composed of 1 PurL, 1 PurQ and 2 PurS subunits.

The protein localises to the cytoplasm. The enzyme catalyses N(2)-formyl-N(1)-(5-phospho-beta-D-ribosyl)glycinamide + L-glutamine + ATP + H2O = 2-formamido-N(1)-(5-O-phospho-beta-D-ribosyl)acetamidine + L-glutamate + ADP + phosphate + H(+). It catalyses the reaction L-glutamine + H2O = L-glutamate + NH4(+). It participates in purine metabolism; IMP biosynthesis via de novo pathway; 5-amino-1-(5-phospho-D-ribosyl)imidazole from N(2)-formyl-N(1)-(5-phospho-D-ribosyl)glycinamide: step 1/2. Part of the phosphoribosylformylglycinamidine synthase complex involved in the purines biosynthetic pathway. Catalyzes the ATP-dependent conversion of formylglycinamide ribonucleotide (FGAR) and glutamine to yield formylglycinamidine ribonucleotide (FGAM) and glutamate. The FGAM synthase complex is composed of three subunits. PurQ produces an ammonia molecule by converting glutamine to glutamate. PurL transfers the ammonia molecule to FGAR to form FGAM in an ATP-dependent manner. PurS interacts with PurQ and PurL and is thought to assist in the transfer of the ammonia molecule from PurQ to PurL. In Oceanobacillus iheyensis (strain DSM 14371 / CIP 107618 / JCM 11309 / KCTC 3954 / HTE831), this protein is Phosphoribosylformylglycinamidine synthase subunit PurQ.